Here is a 317-residue protein sequence, read N- to C-terminus: MPMQEPQRRLLDPFNSTRTGTPHLKLSANQTGPWCLHVSIPDGLFLSLGLVSLVENVLVVISIAKNRNLHSPMYYFICCLALSDLLVSVSIVLETTLILVLEAGALATRVTVVQQLDNVIDVLICGSMVSSLCFLGAIAVDRYISIFYALRYHSIVTLPRARWAIVAIWVASISSSTLFVAYYNHTAVLLCLVTFFLATLALMAVLYVHMLARAHQHAQAIAQLHKRQHLVHQGFRLKGAATLTILLGIFFLCWGPFFLYLTLIVLCPKHPTCSCFFKNLNLFLALIIFNSIVDPLIYAFRSQELRMTLKEVLLCSW.

Residues 1–37 lie on the Extracellular side of the membrane; the sequence is MPMQEPQRRLLDPFNSTRTGTPHLKLSANQTGPWCLH. Asn-15 and Asn-29 each carry an N-linked (GlcNAc...) asparagine glycan. Residues 38-63 traverse the membrane as a helical segment; sequence VSIPDGLFLSLGLVSLVENVLVVISI. The Cytoplasmic portion of the chain corresponds to 64 to 72; it reads AKNRNLHSP. The chain crosses the membrane as a helical span at residues 73–93; sequence MYYFICCLALSDLLVSVSIVL. At 94–118 the chain is on the extracellular side; that stretch reads ETTLILVLEAGALATRVTVVQQLDN. A helical transmembrane segment spans residues 119-140; the sequence is VIDVLICGSMVSSLCFLGAIAV. Residues 141–163 lie on the Cytoplasmic side of the membrane; that stretch reads DRYISIFYALRYHSIVTLPRARW. The chain crosses the membrane as a helical span at residues 164 to 183; it reads AIVAIWVASISSSTLFVAYY. The Extracellular segment spans residues 184–191; it reads NHTAVLLC. The chain crosses the membrane as a helical span at residues 192-211; it reads LVTFFLATLALMAVLYVHML. Residues 212–240 are Cytoplasmic-facing; sequence ARAHQHAQAIAQLHKRQHLVHQGFRLKGA. A helical membrane pass occupies residues 241 to 266; sequence ATLTILLGIFFLCWGPFFLYLTLIVL. Over 267–279 the chain is Extracellular; that stretch reads CPKHPTCSCFFKN. Residues 280–300 traverse the membrane as a helical segment; the sequence is LNLFLALIIFNSIVDPLIYAF. The Cytoplasmic portion of the chain corresponds to 301-317; that stretch reads RSQELRMTLKEVLLCSW. The S-palmitoyl cysteine moiety is linked to residue Cys-315.

This sequence belongs to the G-protein coupled receptor 1 family. Interacts with MGRN1, but does not undergo MGRN1-mediated ubiquitination; this interaction competes with GNAS-binding and thus inhibits agonist-induced cAMP production. Interacts with OPN3; the interaction results in a decrease in MC1R-mediated cAMP signaling and ultimately a decrease in melanin production in melanocytes.

It localises to the cell membrane. In terms of biological role, receptor for MSH (alpha, beta and gamma) and ACTH. The activity of this receptor is mediated by G proteins which activate adenylate cyclase. Mediates melanogenesis, the production of eumelanin (black/brown) and phaeomelanin (red/yellow), via regulation of cAMP signaling in melanocytes. The sequence is that of Melanocyte-stimulating hormone receptor (MC1R) from Chaetodipus baileyi (Bailey's pocket mouse).